The chain runs to 233 residues: LexA repressor (233 aa).

The H-T-H motif DNA-binding region spans 26–46; the sequence is FEEMKEALDLKSKSGVHRLIS. Residues serine 153 and lysine 191 each act as for autocatalytic cleavage activity in the active site.

This sequence belongs to the peptidase S24 family. As to quaternary structure, homodimer.

It catalyses the reaction Hydrolysis of Ala-|-Gly bond in repressor LexA.. In terms of biological role, represses a number of genes involved in the response to DNA damage (SOS response), including recA and lexA. In the presence of single-stranded DNA, RecA interacts with LexA causing an autocatalytic cleavage which disrupts the DNA-binding part of LexA, leading to derepression of the SOS regulon and eventually DNA repair. The protein is LexA repressor of Erythrobacter litoralis (strain HTCC2594).